The sequence spans 1434 residues: Probable ATP-dependent RNA helicase spindle-E (1434 aa).

The Helicase ATP-binding domain occupies 126-295 (INAINENPVV…FANESSAPPV (170 aa)). Residue 139-146 (GETGCGKT) coordinates ATP. A DEAH box motif is present at residues 241–244 (DEVH). The 172-residue stretch at 356–527 (TGKSYNQSLR…NCVLKAKELK (172 aa)) folds into the Helicase C-terminal domain. One can recognise a Tudor domain in the interval 936 to 999 (AGAITKGLML…RLMSQDLLRH (64 aa)).

Belongs to the DEAD box helicase family. DEAH subfamily.

It localises to the cytoplasm. The enzyme catalyses ATP + H2O = ADP + phosphate + H(+). Its function is as follows. Probable ATP-binding RNA helicase which plays a central role during spermatogenesis and oogenesis by repressing transposable elements and preventing their mobilization, which is essential for the germline integrity. Acts via the piRNA metabolic process, which mediates the repression of transposable elements during meiosis by forming complexes composed of piRNAs and Piwi and govern the methylation and subsequent repression of transposons. Involved in the repression of LTR retrotransposon copia. Also involved in telomere regulation by repressing specialized telomeric retroelements HeT-A, TAHRE, and TART; Drosophila telomeres being maintained by transposition of specialized telomeric retroelements. Involved in telomeric trans-silencing, a repression mechanism by which a transposon or a transgene inserted in subtelomeric heterochromatin has the capacity to repress in trans in the female germline, a homologous transposon, or transgene located in euchromatin. Involved in the repression of testis-expressed Stellate genes by the homologous Su(Ste) repeats. Required for anteroposterior and dorsoventral axis formation during oogenesis. The sequence is that of Probable ATP-dependent RNA helicase spindle-E (spn-E) from Drosophila persimilis (Fruit fly).